The primary structure comprises 451 residues: MEFLTKITQQLGLVGEIDKVGSVFVLGEEYRPYIFKTQGKADDAETAFGSFLGNAQTNPQLLSDIETRIFFTYRTQFTPIPRDEEGPSPINLTLFFRDNPINTLENVLTDPDSFYSDIGWGCMIRTGQSLLANAIQRVKQTREFRVNLENIDIKEMSIIQWFQDDWKYPLSLHNFVKVEGKKSGMKPGQWFGPSSTARSIQSLINDFPDCGIDRCLISPQSADIYEDEMIRVFEENKRANVLLLFATRLGVNEINSIYWSDIFQILKSSYSVGIAGGKPSSSLYFFGYQNDYLFYLDPHQTQSSSLDMDDNSYYRSCHGHRFSKIHISETDPSMLLGMLISGKAEWDLFKDEFKNSRIIQFVASKPSDDIYEGVDLSPGSVSVHSIQSDLQDTGDYIDVGNFMSEKANSSQPSKNEEFENVKCKNQRILICENPSETEIEQVLVEDSTTDN.

The active-site Nucleophile is Cys-122. Residues Asp-297 and His-299 contribute to the active site.

This sequence belongs to the peptidase C54 family. As to quaternary structure, interacts with ATG8.

The protein localises to the cytoplasm. The protein resides in the nucleus. It localises to the preautophagosomal structure. The catalysed reaction is [protein]-C-terminal L-amino acid-glycyl-phosphatidylethanolamide + H2O = [protein]-C-terminal L-amino acid-glycine + a 1,2-diacyl-sn-glycero-3-phosphoethanolamine. Its function is as follows. Cysteine protease that plays a key role in cytoplasm to vacuole transport (Cvt) and autophagy by mediating both proteolytic activation and delipidation of ATG8. Required for selective autophagic degradation of the nucleus (nucleophagy) as well as for mitophagy which contributes to regulate mitochondrial quantity and quality by eliminating the mitochondria to a basal level to fulfill cellular energy requirements and preventing excess ROS production. The protease activity is required for proteolytic activation of ATG8: cleaves the C-terminal amino acid of ATG8 to reveal a C-terminal glycine. ATG8 ubiquitin-like activity requires the exposure of the glycine at the C-terminus for its conjugation to phosphatidylethanolamine (PE) and its insertion to membranes, which is necessary for autophagy. The ATG8-PE conjugate mediates tethering between adjacent membranes and stimulates membrane hemifusion, leading to expansion of the autophagosomal membrane during autophagy. In addition to the protease activity, also catalyzes deconjugation of PE-conjugated forms of ATG8 during macroautophagy: ATG8 delipidation is required to release the protein from membranes, which facilitates multiple events during macroautophagy, and especially for efficient autophagosome biogenesis, the assembly of ATG9-containing tubulovesicular clusters into phagophores/autophagosomes, and for the disassembly of PAS-associated ATG components. ATG8 delipidation by ATG4 also recycles ATG8-PE generated on inappropriate membranes to maintain a reservoir of unlipidated ATG8 that is required for autophagosome formation at the PAS. The sequence is that of Cysteine protease ATG4 from Kluyveromyces marxianus (strain DMKU3-1042 / BCC 29191 / NBRC 104275) (Yeast).